A 291-amino-acid chain; its full sequence is Undecaprenyl-diphosphatase (291 aa).

The next 8 helical transmembrane spans lie at 1-21, 48-68, 102-122, 126-146, 162-182, 203-223, 236-256, and 267-287; these read MFII…LTEF, SAFT…AWVF, LHVL…DDFI, LFSV…MIIA, INYF…WPGF, SDFT…LSLL, FYIL…KTFL, and FAIY…GFGI.

It belongs to the UppP family.

It localises to the cell membrane. The catalysed reaction is di-trans,octa-cis-undecaprenyl diphosphate + H2O = di-trans,octa-cis-undecaprenyl phosphate + phosphate + H(+). In terms of biological role, catalyzes the dephosphorylation of undecaprenyl diphosphate (UPP). Confers resistance to bacitracin. The chain is Undecaprenyl-diphosphatase from Staphylococcus aureus (strain MSSA476).